The sequence spans 283 residues: Probable endonuclease 4 (283 aa).

The Zn(2+) site is built by H69, H109, E145, D179, H182, H216, D229, H231, and E261.

Belongs to the AP endonuclease 2 family. The cofactor is Zn(2+).

The catalysed reaction is Endonucleolytic cleavage to 5'-phosphooligonucleotide end-products.. Endonuclease IV plays a role in DNA repair. It cleaves phosphodiester bonds at apurinic or apyrimidinic (AP) sites, generating a 3'-hydroxyl group and a 5'-terminal sugar phosphate. This is Probable endonuclease 4 from Prosthecochloris aestuarii (strain DSM 271 / SK 413).